The sequence spans 336 residues: MNGREHRRGDEAARREARSILFQNQDRSIVLIDVPTSIEEAQASPEEVGCDAGPLRKRRRLISSEPPHLPFKTPEPKAGSGGLTESVSDLMIAAAATEALRVLQESYAGPFCLPRVTRPNPLKSAFVPKGSFFLHGTVSSERDRFAAEAPVFDLIVLDPPWPNRSARRKQRNYRVADSLGSIRETLSLIPIAAHLAPDGLLAVWITNKAGVVELLTGPRGLFAQWGLEQVDEWTWLKITTSGEPIVDVGSTWRKPWERILIARRRGSSRKPACRGRVLVSVPDLHSRKPNLRGLFEDVLVPSNKGLEIFARNLTAGWWSWGDEVLKFQQPEYWVES.

The tract at residues 61–83 (LISSEPPHLPFKTPEPKAGSGGL) is disordered.

Belongs to the MT-A70-like family.

The enzyme catalyses an adenosine in mRNA + S-adenosyl-L-methionine = an N(6)-methyladenosine in mRNA + S-adenosyl-L-homocysteine + H(+). Its function is as follows. N6-methyladenosine RNA methyltransferase that plays a crucial role in fungal phenotypic traits, virulence, and stress tolerance. Mediates the methylation of mRNAs to produce N6-methyladenosine (m6A)-containing mRNAs. M6A is a modification present at internal sites of mRNAs and some non-coding RNAs and plays a role in mRNA stability and processing. Mediates specifically acid phosphatase APHA mRNA stability through a YTHDF1-dependent m6A modification of the A1306, A1341, and A1666 key methylation modification sites. Also mediates the stability of the transcription factor ZAP1 mRNA via modification of residue A1935 localized in the 3'UTR. This chain is N6-methyladenosine RNA methyltransferase MTA1, found in Cryphonectria parasitica (strain ATCC 38755 / EP155).